Consider the following 142-residue polypeptide: Hemoglobin subunit alpha-I/II (142 aa).

The region spanning 2 to 142 is the Globin domain; the sequence is VLSAADKGNV…VSTVLTSKYR (141 aa). A Phosphoserine modification is found at Ser4. Residues Lys8 and Lys12 each carry the N6-succinyllysine modification. Residue Lys17 is modified to N6-acetyllysine; alternate. Lys17 bears the N6-succinyllysine; alternate mark. The residue at position 25 (Tyr25) is a Phosphotyrosine. The residue at position 36 (Ser36) is a Phosphoserine. N6-succinyllysine is present on Lys41. Ser50 carries the phosphoserine modification. His59 provides a ligand contact to O2. A heme b-binding site is contributed by His88. Ser103 bears the Phosphoserine mark. Residue Thr109 is modified to Phosphothreonine. Residue Ser125 is modified to Phosphoserine. Residues Thr135 and Thr138 each carry the phosphothreonine modification. A Phosphoserine modification is found at Ser139.

This sequence belongs to the globin family. Heterotetramer of two alpha chains and two beta chains. Red blood cells.

Involved in oxygen transport from the lung to the various peripheral tissues. This Bison bonasus (European bison) protein is Hemoglobin subunit alpha-I/II.